Here is a 148-residue protein sequence, read N- to C-terminus: SsrA-binding protein (148 aa).

Belongs to the SmpB family.

It localises to the cytoplasm. Its function is as follows. Required for rescue of stalled ribosomes mediated by trans-translation. Binds to transfer-messenger RNA (tmRNA), required for stable association of tmRNA with ribosomes. tmRNA and SmpB together mimic tRNA shape, replacing the anticodon stem-loop with SmpB. tmRNA is encoded by the ssrA gene; the 2 termini fold to resemble tRNA(Ala) and it encodes a 'tag peptide', a short internal open reading frame. During trans-translation Ala-aminoacylated tmRNA acts like a tRNA, entering the A-site of stalled ribosomes, displacing the stalled mRNA. The ribosome then switches to translate the ORF on the tmRNA; the nascent peptide is terminated with the 'tag peptide' encoded by the tmRNA and targeted for degradation. The ribosome is freed to recommence translation, which seems to be the essential function of trans-translation. In Pseudothermotoga lettingae (strain ATCC BAA-301 / DSM 14385 / NBRC 107922 / TMO) (Thermotoga lettingae), this protein is SsrA-binding protein.